Here is a 296-residue protein sequence, read N- to C-terminus: Probable cell wall protein PGA41 (296 aa).

The signal sequence occupies residues 1–18; sequence MKFTIVLFTLISVTVAAA. A compositionally biased stretch (low complexity) spans 146 to 212; sequence IASSTKESSS…ITTISSDSST (67 aa). The interval 146–276 is disordered; it reads IASSTKESSS…PNSSQTAPGA (131 aa). Positions 220–245 are enriched in gly residues; the sequence is QGGGGNSGNNGSNGDGGNDASGGGGV. 2 N-linked (GlcNAc...) asparagine glycosylation sites follow: Asn229 and Asn268. The segment covering 247 to 274 has biased composition (low complexity); it reads NENEQASSPPSSQSSTNSNQPNSSQTAP. The GPI-anchor amidated glycine moiety is linked to residue Gly275. A propeptide spans 276–296 (removed in mature form); sequence AANYLSSVSVGTLMILVLGLI.

Belongs to the IHD1 family. Post-translationally, the GPI-anchor is attached to the protein in the endoplasmic reticulum and serves to target the protein to the cell surface. There, the glucosamine-inositol phospholipid moiety is cleaved off and the GPI-modified mannoprotein is covalently attached via its lipidless GPI glycan remnant to the 1,6-beta-glucan of the outer cell wall layer.

The protein resides in the secreted. It localises to the cell wall. It is found in the membrane. Probable GPI-anchored cell wall protein that may be involved in cell wall organization, hyphal growth, as well as in virulence. The protein is Probable cell wall protein PGA41 (PGA41) of Candida albicans (strain SC5314 / ATCC MYA-2876) (Yeast).